Consider the following 124-residue polypeptide: LOB domain-containing protein 9 (124 aa).

An LOB domain is found at 11-113; the sequence is APCALCTTKN…IYLNELKEKI (103 aa).

It belongs to the LOB domain-containing protein family.

In Arabidopsis thaliana (Mouse-ear cress), this protein is LOB domain-containing protein 9 (LBD9).